Here is a 915-residue protein sequence, read N- to C-terminus: Probable inorganic carbon transporter subunit DabA (915 aa).

Zn(2+) is bound by residues Cys-392, Asp-394, His-566, and Cys-581.

The protein belongs to the inorganic carbon transporter (TC 9.A.2) DabA family. Forms a complex with DabB. Zn(2+) is required as a cofactor.

It is found in the cell inner membrane. In terms of biological role, part of an energy-coupled inorganic carbon pump. This Nitrosospira multiformis (strain ATCC 25196 / NCIMB 11849 / C 71) protein is Probable inorganic carbon transporter subunit DabA.